Here is a 234-residue protein sequence, read N- to C-terminus: Octanoyltransferase (234 aa).

A BPL/LPL catalytic domain is found at 50–234 (GEAPELVWLL…AFEQVFGPTR (185 aa)). Substrate contacts are provided by residues 88–95 (RGGQITYH), 163–165 (AIG), and 176–178 (GIA). The active-site Acyl-thioester intermediate is the Cys-194.

Belongs to the LipB family.

It is found in the cytoplasm. It carries out the reaction octanoyl-[ACP] + L-lysyl-[protein] = N(6)-octanoyl-L-lysyl-[protein] + holo-[ACP] + H(+). It participates in protein modification; protein lipoylation via endogenous pathway; protein N(6)-(lipoyl)lysine from octanoyl-[acyl-carrier-protein]: step 1/2. Functionally, catalyzes the transfer of endogenously produced octanoic acid from octanoyl-acyl-carrier-protein onto the lipoyl domains of lipoate-dependent enzymes. Lipoyl-ACP can also act as a substrate although octanoyl-ACP is likely to be the physiological substrate. In Rhodopseudomonas palustris (strain BisA53), this protein is Octanoyltransferase.